Reading from the N-terminus, the 306-residue chain is Beta-lactamase (306 aa).

The tat-type signal signal peptide spans 1–34 (MDRTTARPNRRAVLATGVGAALAATAAAAGPAHA). Catalysis depends on serine 82, which acts as the Acyl-ester intermediate. 250–252 (KTG) contributes to the substrate binding site.

This sequence belongs to the class-A beta-lactamase family. In terms of processing, predicted to be exported by the Tat system. The position of the signal peptide cleavage has not been experimentally proven.

The enzyme catalyses a beta-lactam + H2O = a substituted beta-amino acid. The sequence is that of Beta-lactamase (blaF) from Streptomyces fradiae (Streptomyces roseoflavus).